The primary structure comprises 384 residues: Eukaryotic translation initiation factor 3 subunit M (384 aa).

One can recognise a PCI domain in the interval Glu184–Pro346.

This sequence belongs to the eIF-3 subunit M family. In terms of assembly, component of the eukaryotic translation initiation factor 3 (eIF-3) complex.

It localises to the cytoplasm. Functionally, component of the eukaryotic translation initiation factor 3 (eIF-3) complex, which is involved in protein synthesis of a specialized repertoire of mRNAs and, together with other initiation factors, stimulates binding of mRNA and methionyl-tRNAi to the 40S ribosome. The eIF-3 complex specifically targets and initiates translation of a subset of mRNAs involved in cell proliferation. The sequence is that of Eukaryotic translation initiation factor 3 subunit M from Schistosoma japonicum (Blood fluke).